A 433-amino-acid chain; its full sequence is L-saccharopine oxidase (433 aa).

Positions 1–18 are cleaved as a signal peptide; it reads MSRTIVIVGCGVFGLSTA. Residues Asn24, Asn119, Asn188, and Asn229 are each glycosylated (N-linked (GlcNAc...) asparagine).

It belongs to the MSOX/MTOX family. In terms of assembly, monomer. FAD serves as cofactor.

It is found in the secreted. It localises to the cytoplasm. The protein resides in the nucleus. It catalyses the reaction L-saccharopine + O2 + H2O = (S)-2-amino-6-oxohexanoate + L-glutamate + H2O2. This chain is L-saccharopine oxidase, found in Schizosaccharomyces pombe (strain 972 / ATCC 24843) (Fission yeast).